A 261-amino-acid polypeptide reads, in one-letter code: RING finger protein 208 (261 aa).

Residues 83–106 form a disordered region; sequence PALEGAPHTPPLPRRPRKGSSELG. Residue Ser102 is modified to Phosphoserine. An RING-type zinc finger spans residues 143–190; sequence CPTCGHSYNVTQRRPRVLSCLHSVCEQCLQILYESCPKYKFISCPTCR.

The chain is RING finger protein 208 (RNF208) from Homo sapiens (Human).